The chain runs to 69 residues: Conotoxin AbVIE (69 aa).

Positions 1 to 17 (VLIIAVLFLTACQLTTA) are cleaved as a signal peptide. Residues 18–40 (ETSSRGKQKHRALRSTDKYSRMT) constitute a propeptide that is removed on maturation. 3 cysteine pairs are disulfide-bonded: Cys43–Cys57, Cys50–Cys61, and Cys56–Cys66.

Belongs to the conotoxin O1 superfamily. As to expression, expressed by the venom duct.

It is found in the secreted. This chain is Conotoxin AbVIE, found in Conus abbreviatus (Abbreviated cone).